We begin with the raw amino-acid sequence, 222 residues long: S-crystallin SL20-1 (222 aa).

One can recognise a GST N-terminal domain in the interval 2-80 (PNYTLYYFNG…YLARENGYYG (79 aa)). The region spanning 82-222 (NNMDMFRIDY…YLKKRNNTNW (141 aa)) is the GST C-terminal domain.

This sequence belongs to the GST superfamily. As to expression, lens.

S-crystallins are structural components of squids and octopi eye lens. Contains relatively little if any GST activity. The polypeptide is S-crystallin SL20-1 (Nototodarus sloanii (Wellington flying squid)).